Reading from the N-terminus, the 195-residue chain is Dephospho-CoA kinase (195 aa).

A DPCK domain is found at 4 to 195 (IIGLTGGIAS…EQILDALQRL (192 aa)). Position 12-17 (12-17 (ASGKST)) interacts with ATP.

This sequence belongs to the CoaE family.

The protein localises to the cytoplasm. It carries out the reaction 3'-dephospho-CoA + ATP = ADP + CoA + H(+). The protein operates within cofactor biosynthesis; coenzyme A biosynthesis; CoA from (R)-pantothenate: step 5/5. Catalyzes the phosphorylation of the 3'-hydroxyl group of dephosphocoenzyme A to form coenzyme A. The polypeptide is Dephospho-CoA kinase (Streptococcus agalactiae serotype Ia (strain ATCC 27591 / A909 / CDC SS700)).